We begin with the raw amino-acid sequence, 880 residues long: DNA-directed RNA polymerase subunit Rpo1N (880 aa).

Residues Cys-58, Cys-61, Cys-68, and His-71 each coordinate Zn(2+). DsDNA is bound by residues Lys-88 and 92 to 95 (EFLK). Cys-98 and Cys-101 together coordinate Zn(2+). Residue Lys-138 coordinates dsDNA. 2 residues coordinate Zn(2+): Cys-146 and Cys-149. Residues Lys-303, 305–310 (KEGRFR), Arg-323, and Gln-422 contribute to the dsDNA site. Mg(2+) is bound by residues Asp-456, Asp-458, and Asp-460. Zn(2+)-binding residues include Arg-573, Cys-575, Cys-580, and His-582. Residues 812–822 (RTSQSGYMQRR) and Gln-815 each bind dsDNA.

Belongs to the RNA polymerase beta' chain family. In terms of assembly, part of the 13-subunit RNA polymerase complex. Rpo1N and Rpo5 form a cleft which docks Rpo13. Interacts with Rpo8 on the periphery of the clamp head. Mg(2+) is required as a cofactor. The cofactor is Zn(2+).

It localises to the cytoplasm. It catalyses the reaction RNA(n) + a ribonucleoside 5'-triphosphate = RNA(n+1) + diphosphate. Functionally, DNA-dependent RNA polymerase (RNAP) catalyzes the transcription of DNA into RNA using the four ribonucleoside triphosphates as substrates. Forms the clamp head domain. This is DNA-directed RNA polymerase subunit Rpo1N from Saccharolobus shibatae (strain ATCC 51178 / DSM 5389 / JCM 8931 / NBRC 15437 / B12) (Sulfolobus shibatae).